Reading from the N-terminus, the 208-residue chain is Protein GrpE (208 aa).

A compositionally biased stretch (basic and acidic residues) spans 1-25; it reads MVDNKDFNEELKENIQEELDNETKA. The tract at residues 1–38 is disordered; it reads MVDNKDFNEELKENIQEELDNETKAENPNIDEEVEEVS. Positions 29–38 are enriched in acidic residues; sequence NIDEEVEEVS.

It belongs to the GrpE family. In terms of assembly, homodimer.

The protein localises to the cytoplasm. Its function is as follows. Participates actively in the response to hyperosmotic and heat shock by preventing the aggregation of stress-denatured proteins, in association with DnaK and GrpE. It is the nucleotide exchange factor for DnaK and may function as a thermosensor. Unfolded proteins bind initially to DnaJ; upon interaction with the DnaJ-bound protein, DnaK hydrolyzes its bound ATP, resulting in the formation of a stable complex. GrpE releases ADP from DnaK; ATP binding to DnaK triggers the release of the substrate protein, thus completing the reaction cycle. Several rounds of ATP-dependent interactions between DnaJ, DnaK and GrpE are required for fully efficient folding. The protein is Protein GrpE of Clostridium perfringens (strain 13 / Type A).